The primary structure comprises 405 residues: MKSRSNVLSIVLAGGEGKRLYPFTADRAKPAVPFGGNYRLIDFVLSNLVNAGYYKICVLTQYKSHSLDRHISQSWQLSGLTGQYITPVPAQQRLGKRWFTGSADAILQSLNLVYDEQPDYIIVFGADHVYRMDPEQMVQEHIKAGAGVTVAGLRVPRHEATAFGVIQADDDNKIEQFLEKPAEPPSVPDDPEVSFASMGNYVFTAQTLIDALKEDSEDENSNHDMGGDIIPRLVDRGEAYVYDFSNNYVPGETERDKGYWRDVGTVDAFYEAHMDLISVHPVFNLYNQQWPIHTAETGNLPPAKFVKGGIAQSSMVSAGCIISAGTVRNSVLSENVVVEEGASVEGCVIMPGVRIGRGAVVRHAIIDKNVQVSAGEIIGVDRARDQDRFTISKGGVVCIGKNVVV.

Alpha-D-glucose 1-phosphate contacts are provided by residues Gly164, 179 to 180 (EK), and Ser197.

It belongs to the bacterial/plant glucose-1-phosphate adenylyltransferase family. As to quaternary structure, homotetramer.

The enzyme catalyses alpha-D-glucose 1-phosphate + ATP + H(+) = ADP-alpha-D-glucose + diphosphate. It participates in glycan biosynthesis; glycogen biosynthesis. Functionally, involved in the biosynthesis of ADP-glucose, a building block required for the elongation reactions to produce glycogen. Catalyzes the reaction between ATP and alpha-D-glucose 1-phosphate (G1P) to produce pyrophosphate and ADP-Glc. This Corynebacterium jeikeium (strain K411) protein is Glucose-1-phosphate adenylyltransferase.